The primary structure comprises 975 residues: Glycine dehydrogenase (decarboxylating) (975 aa).

Lys-723 is modified (N6-(pyridoxal phosphate)lysine).

Belongs to the GcvP family. As to quaternary structure, the glycine cleavage system is composed of four proteins: P, T, L and H. Pyridoxal 5'-phosphate is required as a cofactor.

It carries out the reaction N(6)-[(R)-lipoyl]-L-lysyl-[glycine-cleavage complex H protein] + glycine + H(+) = N(6)-[(R)-S(8)-aminomethyldihydrolipoyl]-L-lysyl-[glycine-cleavage complex H protein] + CO2. Its function is as follows. The glycine cleavage system catalyzes the degradation of glycine. The P protein binds the alpha-amino group of glycine through its pyridoxal phosphate cofactor; CO(2) is released and the remaining methylamine moiety is then transferred to the lipoamide cofactor of the H protein. The protein is Glycine dehydrogenase (decarboxylating) of Burkholderia thailandensis (strain ATCC 700388 / DSM 13276 / CCUG 48851 / CIP 106301 / E264).